We begin with the raw amino-acid sequence, 486 residues long: Aspartyl/glutamyl-tRNA(Asn/Gln) amidotransferase subunit B (486 aa).

This sequence belongs to the GatB/GatE family. GatB subfamily. As to quaternary structure, heterotrimer of A, B and C subunits.

The enzyme catalyses L-glutamyl-tRNA(Gln) + L-glutamine + ATP + H2O = L-glutaminyl-tRNA(Gln) + L-glutamate + ADP + phosphate + H(+). It catalyses the reaction L-aspartyl-tRNA(Asn) + L-glutamine + ATP + H2O = L-asparaginyl-tRNA(Asn) + L-glutamate + ADP + phosphate + 2 H(+). Allows the formation of correctly charged Asn-tRNA(Asn) or Gln-tRNA(Gln) through the transamidation of misacylated Asp-tRNA(Asn) or Glu-tRNA(Gln) in organisms which lack either or both of asparaginyl-tRNA or glutaminyl-tRNA synthetases. The reaction takes place in the presence of glutamine and ATP through an activated phospho-Asp-tRNA(Asn) or phospho-Glu-tRNA(Gln). The sequence is that of Aspartyl/glutamyl-tRNA(Asn/Gln) amidotransferase subunit B from Orientia tsutsugamushi (strain Ikeda) (Rickettsia tsutsugamushi).